Consider the following 468-residue polypeptide: Uronate isomerase (468 aa).

The protein belongs to the metallo-dependent hydrolases superfamily. Uronate isomerase family.

It catalyses the reaction D-glucuronate = D-fructuronate. The enzyme catalyses aldehydo-D-galacturonate = keto-D-tagaturonate. It functions in the pathway carbohydrate metabolism; pentose and glucuronate interconversion. The chain is Uronate isomerase from Endomicrobium trichonymphae.